The chain runs to 764 residues: Polymeric immunoglobulin receptor (764 aa).

The first 18 residues, 1-18 (MLLFVLTCLLAVFPAIST), serve as a signal peptide directing secretion. Residues 19–120 (KSPIFGPEEV…GLGINSRGLS (102 aa)) enclose the Ig-like V-type 1; required for binding to polymeric IgA and IgM domain. Over 19-638 (KSPIFGPEEV…SSEEQGGSSR (620 aa)) the chain is Extracellular. Intrachain disulfides connect Cys-40–Cys-110 and Cys-56–Cys-64. N-linked (GlcNAc...) asparagine glycosylation is found at Asn-83, Asn-90, Asn-135, and Asn-186. 4 Ig-like V-type domains span residues 145 to 237 (GRTV…DLQV), 250 to 352 (RGSV…ESTI), 364 to 458 (GGSV…IKII), and 462 to 561 (PNLK…VYVA). Disulfide bonds link Cys-152-Cys-220, Cys-257-Cys-325, Cys-271-Cys-279, Cys-371-Cys-441, and Cys-385-Cys-395. N-linked (GlcNAc...) asparagine glycosylation occurs at Asn-421. Asn-469 carries an N-linked (GlcNAc...) (complex) asparagine glycan. Intrachain disulfides connect Cys-482-Cys-544, Cys-486-Cys-520, and Cys-496-Cys-503. The N-linked (GlcNAc...) asparagine glycan is linked to Asn-499. Positions 609-619 (KAVADTRDQAD) are enriched in basic and acidic residues. Positions 609–637 (KAVADTRDQADGSRASVDSGSSEEQGGSS) are disordered. The segment covering 627-637 (SGSSEEQGGSS) has biased composition (low complexity). The chain crosses the membrane as a helical span at residues 639 to 661 (ALVSTLVPLGLVLAVGAVAVGVA). Residues 662–764 (RARHRKNVDR…AEAQDGPQEA (103 aa)) lie on the Cytoplasmic side of the membrane. 4 positions are modified to phosphoserine: Ser-673, Ser-682, Ser-689, and Ser-735. Residues 717-738 (ATTESTTETKEPKKAKRSSKEE) are disordered. Over residues 723–738 (TETKEPKKAKRSSKEE) the composition is skewed to basic and acidic residues.

As to quaternary structure, interacts (mainly via CDR1-like domain) with dimeric IgA. Interacts (mainly via CDR2-like domain) with pentameric IgM. In terms of assembly, either free or part of the secretory IgA (sIgA) complex that consists of two, four or five IgA monomers, and two additional non-Ig polypeptides, namely the JCHAIN and the secretory component (the proteolytic product of PIGR). Free secretory component interacts with bacterial antigens toxA of C.difficile and eaeA of E.coli. N-glycosylated. N-glycosylation is required for anchoring IgA molecules to mucus, but is not necessary for Ig binding.

It localises to the cell membrane. The protein localises to the secreted. In terms of biological role, mediates selective transcytosis of polymeric IgA and IgM across mucosal epithelial cells. Binds polymeric IgA and IgM at the basolateral surface of epithelial cells. The complex is then transported across the cell to be secreted at the apical surface. During this process, a cleavage occurs that separates the extracellular (known as the secretory component) from the transmembrane segment. Through its N-linked glycans ensures anchoring of secretory IgA (sIgA) molecules to mucus lining the epithelial surface to neutralize extracellular pathogens. On its own (free form) may act as a non-specific microbial scavenger to prevent pathogen interaction with epithelial cells. This is Polymeric immunoglobulin receptor (PIGR) from Homo sapiens (Human).